Reading from the N-terminus, the 122-residue chain is Large ribosomal subunit protein uL14 (122 aa).

The protein belongs to the universal ribosomal protein uL14 family. In terms of assembly, part of the 50S ribosomal subunit. Forms a cluster with proteins L3 and L19. In the 70S ribosome, L14 and L19 interact and together make contacts with the 16S rRNA in bridges B5 and B8.

Its function is as follows. Binds to 23S rRNA. Forms part of two intersubunit bridges in the 70S ribosome. This is Large ribosomal subunit protein uL14 from Cereibacter sphaeroides (strain ATCC 17029 / ATH 2.4.9) (Rhodobacter sphaeroides).